We begin with the raw amino-acid sequence, 254 residues long: Coiled-coil domain-containing protein 152 (254 aa).

Positions 61 to 246 (SIKEECATLH…LEQRLSVGKD (186 aa)) form a coiled coil.

Detected in stomach.

This Homo sapiens (Human) protein is Coiled-coil domain-containing protein 152 (CCDC152).